We begin with the raw amino-acid sequence, 761 residues long: Elongation factor G, mitochondrial (761 aa).

The N-terminal 33 residues, 1–33 (MTSVLRGVLKTHLPRTLTLPRCARNFQTTTFLR), are a transit peptide targeting the mitochondrion. Positions 66-347 (TRLRNIGISA…SVVDYLPQPN (282 aa)) constitute a tr-type G domain. Residues 75–82 (AHIDSGKT), 146–150 (DTPGH), and 200–203 (NKMD) contribute to the GTP site.

It belongs to the TRAFAC class translation factor GTPase superfamily. Classic translation factor GTPase family. EF-G/EF-2 subfamily.

The protein resides in the mitochondrion. It participates in protein biosynthesis; polypeptide chain elongation. Its function is as follows. Mitochondrial GTPase that catalyzes the GTP-dependent ribosomal translocation step during translation elongation. During this step, the ribosome changes from the pre-translocational (PRE) to the post-translocational (POST) state as the newly formed A-site-bound peptidyl-tRNA and P-site-bound deacylated tRNA move to the P and E sites, respectively. Catalyzes the coordinated movement of the two tRNA molecules, the mRNA and conformational changes in the ribosome. This is Elongation factor G, mitochondrial from Candida dubliniensis (strain CD36 / ATCC MYA-646 / CBS 7987 / NCPF 3949 / NRRL Y-17841) (Yeast).